The following is an 85-amino-acid chain: Insect toxin 2-53 (85 aa).

Positions 1 to 21 are cleaved as a signal peptide; it reads MKLLLLLIVSASMLIESLVNA. One can recognise an LCN-type CS-alpha/beta domain in the interval 22–82; that stretch reads DGYIKRRDGC…TWKSETNTCG (61 aa). Cystine bridges form between Cys31–Cys81, Cys35–Cys56, Cys42–Cys63, and Cys46–Cys65. Gly82 is modified (glycine amide).

It belongs to the long (4 C-C) scorpion toxin superfamily. Sodium channel inhibitor family. Beta subfamily. In terms of tissue distribution, expressed by the venom gland.

The protein resides in the secreted. Depressant insect toxins cause a transient contraction paralysis followed by a slow flaccid paralysis. They bind voltage-independently to sodium channels (Nav) and block action potentials, primarily by depolarizing the axonal membrane and suppressing the sodium current. This chain is Insect toxin 2-53, found in Leiurus hebraeus (Hebrew deathstalker scorpion).